A 352-amino-acid polypeptide reads, in one-letter code: Methylthioribose-1-phosphate isomerase (352 aa).

Substrate contacts are provided by residues 55–57, arginine 98, and glutamine 201; that span reads RGA. The active-site Proton donor is the aspartate 242. 252 to 253 lines the substrate pocket; sequence NK.

It belongs to the eIF-2B alpha/beta/delta subunits family. MtnA subfamily.

It catalyses the reaction 5-(methylsulfanyl)-alpha-D-ribose 1-phosphate = 5-(methylsulfanyl)-D-ribulose 1-phosphate. Its pathway is amino-acid biosynthesis; L-methionine biosynthesis via salvage pathway; L-methionine from S-methyl-5-thio-alpha-D-ribose 1-phosphate: step 1/6. In terms of biological role, catalyzes the interconversion of methylthioribose-1-phosphate (MTR-1-P) into methylthioribulose-1-phosphate (MTRu-1-P). This is Methylthioribose-1-phosphate isomerase from Methylococcus capsulatus (strain ATCC 33009 / NCIMB 11132 / Bath).